Reading from the N-terminus, the 317-residue chain is HTH-type transcriptional repressor PA14_22550 (317 aa).

Residues 1–59 (MDKLTAMATFVKVVDAGSFTRAADALGLPKARVSQRVSDLEKHLGVRLLNRTTRALSLT) enclose the HTH lysR-type domain. A DNA-binding region (H-T-H motif) is located at residues 19–38 (FTRAADALGLPKARVSQRVS).

This sequence belongs to the LysR transcriptional regulatory family.

Represses the transcription of the operon that consists of PA14_22510 to PA14_22540. This Pseudomonas aeruginosa (strain UCBPP-PA14) protein is HTH-type transcriptional repressor PA14_22550.